A 2090-amino-acid polypeptide reads, in one-letter code: Non-reducing polyketide synthase rdc1 (2090 aa).

The segment at 12-250 is N-terminal acylcarrier protein transacylase (SAT) domain; the sequence is FLVGDQVDSW…NPLNIHALQH (239 aa). Positions 375 to 808 constitute a Ketosynthase family 3 (KS3) domain; that stretch reads TGRIAIVGMS…GGNACLLLED (434 aa). Residues cysteine 551, histidine 686, and histidine 726 each act as for beta-ketoacyl synthase activity in the active site. The tract at residues 912–1195 is malonyl-CoA:ACP transacylase (MAT) domain; that stretch reads IFVFSGQGSH…NQVCTQFVRA (284 aa). Serine 1003 serves as the catalytic For acyl/malonyl transferase activity. Residues 1293–1433 form an N-terminal hotdog fold region; that stretch reads QHVAKESSSN…LVVQKNVKAL (141 aa). Positions 1293–1607 constitute a PKS/mFAS DH domain; it reads QHVAKESSSN…FVRISNALLQ (315 aa). The segment at 1304-1604 is product template (PT) domain; it reads GKLEITFRAS…NLSFVRISNA (301 aa). The segment at 1459–1607 is C-terminal hotdog fold; that stretch reads QGHWLKHDIF…FVRISNALLQ (149 aa). Positions 1615–1650 are disordered; sequence SKPVGRGMAKQEKQEVPATTEVVRQPEKEESRHSVD. A compositionally biased stretch (basic and acidic residues) spans 1638-1649; that stretch reads RQPEKEESRHSV. Positions 1649–1726 constitute a Carrier domain; that stretch reads VDTPSFSDVL…DIKRAFDILT (78 aa). O-(pantetheine 4'-phosphoryl)serine is present on serine 1686. The thioesterase (TE) domain stretch occupies residues 1820–1964; sequence ADGTGSIATY…THQHLKALFA (145 aa).

The protein operates within secondary metabolite biosynthesis. In terms of biological role, non-reducing polyketide synthase; part of the gene cluster that mediates the biosynthesis of radicicol, a resorcylic acid lactone (RAL) that irreversibly inhibits the HSP90 molecular chaperone, an important target for cancer chemotherapy. The radicicol cluster encodes only two apparent post-PKS enzymes, a cytochrome P450 monooxygenase (rdc4) and a non-heme halogenase (rdc2) that could introduce the epoxide and the chlorine, respectively. If this cluster includes all the genes required for radicicol biosynthesis, the remaining structural features of radicicol are presumably generated by the PKSs rdc1 and rdc5. The C-2' ketone could arise if the R-PKS rdc5 and NR-PKS rdc1 each carry out four iterations, in contrast to the five iteration-three iteration split for the hypothemycin PKSs. The origin of the cis 5',6' double bond is not known. The radicicol R-PKS rdc5 ER domain may catalyze either double bond isomerization or reduction in the third iteration. The polypeptide is Non-reducing polyketide synthase rdc1 (Metacordyceps chlamydosporia (Nematophagous fungus)).